The primary structure comprises 542 residues: CTP synthase (542 aa).

Positions 1 to 265 (MARYVFITGG…DDEVLAAFGI (265 aa)) are amidoligase domain. Residue S13 coordinates CTP. S13 serves as a coordination point for UTP. Residues 14 to 19 (SLGKGI) and D71 contribute to the ATP site. Mg(2+) contacts are provided by D71 and E139. CTP-binding positions include 146–148 (DIE), 186–191 (KTKPTQ), and K222. Residues 186–191 (KTKPTQ) and K222 contribute to the UTP site. The Glutamine amidotransferase type-1 domain occupies 291–541 (TIAIVGKYTG…IEAATEQSRL (251 aa)). Residue G353 coordinates L-glutamine. C380 serves as the catalytic Nucleophile; for glutamine hydrolysis. Residues 381-384 (FGMQ), E404, and R469 contribute to the L-glutamine site. Catalysis depends on residues H514 and E516.

Belongs to the CTP synthase family. Homotetramer.

The enzyme catalyses UTP + L-glutamine + ATP + H2O = CTP + L-glutamate + ADP + phosphate + 2 H(+). It catalyses the reaction L-glutamine + H2O = L-glutamate + NH4(+). The catalysed reaction is UTP + NH4(+) + ATP = CTP + ADP + phosphate + 2 H(+). Its pathway is pyrimidine metabolism; CTP biosynthesis via de novo pathway; CTP from UDP: step 2/2. Its activity is regulated as follows. Allosterically activated by GTP, when glutamine is the substrate; GTP has no effect on the reaction when ammonia is the substrate. The allosteric effector GTP functions by stabilizing the protein conformation that binds the tetrahedral intermediate(s) formed during glutamine hydrolysis. Inhibited by the product CTP, via allosteric rather than competitive inhibition. Its function is as follows. Catalyzes the ATP-dependent amination of UTP to CTP with either L-glutamine or ammonia as the source of nitrogen. Regulates intracellular CTP levels through interactions with the four ribonucleotide triphosphates. The polypeptide is CTP synthase (Rhizobium etli (strain CIAT 652)).